The following is a 336-amino-acid chain: Ketol-acid reductoisomerase (NADP(+)) (336 aa).

Residues 1–182 (MAVIYYDKDA…GVTRAGVIET (182 aa)) enclose the KARI N-terminal Rossmann domain. Residues 25-28 (YGSQ), arginine 48, serine 51, serine 53, and 83-86 (DEHQ) contribute to the NADP(+) site. Histidine 108 is a catalytic residue. Glycine 134 serves as a coordination point for NADP(+). A KARI C-terminal knotted domain is found at 183–328 (TFKEETETDL…KELRKMMPWL (146 aa)). Mg(2+) contacts are provided by aspartate 191, glutamate 195, glutamate 227, and glutamate 231. A substrate-binding site is contributed by serine 252.

Belongs to the ketol-acid reductoisomerase family. It depends on Mg(2+) as a cofactor.

It carries out the reaction (2R)-2,3-dihydroxy-3-methylbutanoate + NADP(+) = (2S)-2-acetolactate + NADPH + H(+). It catalyses the reaction (2R,3R)-2,3-dihydroxy-3-methylpentanoate + NADP(+) = (S)-2-ethyl-2-hydroxy-3-oxobutanoate + NADPH + H(+). The protein operates within amino-acid biosynthesis; L-isoleucine biosynthesis; L-isoleucine from 2-oxobutanoate: step 2/4. It participates in amino-acid biosynthesis; L-valine biosynthesis; L-valine from pyruvate: step 2/4. Involved in the biosynthesis of branched-chain amino acids (BCAA). Catalyzes an alkyl-migration followed by a ketol-acid reduction of (S)-2-acetolactate (S2AL) to yield (R)-2,3-dihydroxy-isovalerate. In the isomerase reaction, S2AL is rearranged via a Mg-dependent methyl migration to produce 3-hydroxy-3-methyl-2-ketobutyrate (HMKB). In the reductase reaction, this 2-ketoacid undergoes a metal-dependent reduction by NADPH to yield (R)-2,3-dihydroxy-isovalerate. This is Ketol-acid reductoisomerase (NADP(+)) from Thermotoga maritima (strain ATCC 43589 / DSM 3109 / JCM 10099 / NBRC 100826 / MSB8).